A 198-amino-acid chain; its full sequence is Bcl-2-like protein 11 (198 aa).

Positions 1–72 (MAKQPSDVSS…PLAPPASPGP (72 aa)) are disordered. A Phosphoserine; by MAPK modification is found at serine 69. Phosphoserine is present on residues serine 77, serine 87, and serine 94. Residues 148-162 (IAQELRRIGDEFNAY) carry the BH3 motif.

It belongs to the Bcl-2 family. Forms heterodimers with a number of antiapoptotic Bcl-2 proteins, including MCL1, BCL2, BCL2L1 isoform Bcl-X(L), BCL2A1/BFL-1, BHRF1, and BCL2L2/BCLW. Does not heterodimerize with proapoptotic proteins such as BAD, BOK or BAK. Identified in a complex containing BCL2L11, DYNLL1 and BCL2L1 isoform Bcl-X(L); BH3 integrity is required for BCL2L1-binding. Interacts with YWHAZ. When phosphorylated, interacts with TRIM2; this interaction is associated with ubiquitination and degradation. Interacts with MCL1; may sequester BCL2L11 to prevent its pro-apoptotic activity. Interacts with GIMAP5. Interacts with BCL2L10/BCL-B. In terms of assembly, interacts (when phosphorylated) with USP27X; the interaction leads to BCL2L11 deubiquitination and stabilization. Interacts with humanin; the interaction prevents BIM-induced apoptosis. As to quaternary structure, does not interact with humanin. Interacts with BAX; the interaction may lead to BAX activation through conformational change. Does not interact with humanin. In terms of assembly, interacts with BAX; the interaction may lead to BAX activation through conformational change. In terms of processing, phosphorylation at Ser-69 by MAPK1/MAPK3 leads to interaction with TRIM2 and polyubiquitination, followed by proteasomal degradation. Deubiquitination catalyzed by USP27X stabilizes the protein. Ubiquitination by TRIM2 following phosphorylation by MAPK1/MAPK3 leads to proteasomal degradation. Conversely, deubiquitination catalyzed by USP27X stabilizes the protein. As to expression, isoform BimEL, isoform BimL and isoform BimS are the predominant isoforms and are widely expressed with tissue-specific variation. Isoform Bim-gamma is most abundantly expressed in small intestine and colon, and in lower levels in spleen, prostate, testis, heart, liver and kidney.

Its subcellular location is the endomembrane system. It localises to the mitochondrion. In terms of biological role, induces apoptosis and anoikis. Isoform BimL is more potent than isoform BimEL. Isoform Bim-alpha1, isoform Bim-alpha2 and isoform Bim-alpha3 induce apoptosis, although less potent than isoform BimEL, isoform BimL and isoform BimS. Isoform Bim-gamma induces apoptosis. Isoform Bim-alpha3 induces apoptosis possibly through a caspase-mediated pathway. Isoform BimAC and isoform BimABC lack the ability to induce apoptosis. The chain is Bcl-2-like protein 11 (BCL2L11) from Homo sapiens (Human).